A 246-amino-acid chain; its full sequence is Chloroplastic group IIB intron splicing facilitator CRS2-A, chloroplastic (246 aa).

A chloroplast-targeting transit peptide spans methionine 1–arginine 34. Tyrosine 64 serves as a coordination point for tRNA. Histidine 69 serves as the catalytic Proton acceptor. TRNA contacts are provided by tyrosine 114, asparagine 116, and asparagine 162.

It belongs to the PTH family. CRS2 subfamily. In terms of assembly, part of large ribonucleo-protein complexes that include group IIB introns and either CAF1 or CAF2.

The protein resides in the plastid. It is found in the chloroplast stroma. Required for the splicing of group IIB introns in chloroplasts. The chain is Chloroplastic group IIB intron splicing facilitator CRS2-A, chloroplastic (CRS2A) from Arabidopsis thaliana (Mouse-ear cress).